The sequence spans 196 residues: Small ribosomal subunit protein uS4c (196 aa).

Residues 15-42 are disordered; the sequence is LGALPGLTRKTPKSGSNQKKKFNSGKKE. In terms of domain architecture, S4 RNA-binding spans 89-150; the sequence is MRLDNILFRL…NQRSKRLVQN (62 aa).

Belongs to the universal ribosomal protein uS4 family. In terms of assembly, part of the 30S ribosomal subunit. Contacts protein S5. The interaction surface between S4 and S5 is involved in control of translational fidelity.

The protein resides in the plastid. The protein localises to the chloroplast. In terms of biological role, one of the primary rRNA binding proteins, it binds directly to 16S rRNA where it nucleates assembly of the body of the 30S subunit. Functionally, with S5 and S12 plays an important role in translational accuracy. The polypeptide is Small ribosomal subunit protein uS4c (rps4) (Cenchrus longisetus (Feathertop)).